A 204-amino-acid chain; its full sequence is Ribonuclease HII (204 aa).

The region spanning 17-204 (TLIAGVDEVG…KPVKKVLGLL (188 aa)) is the RNase H type-2 domain. Residues Asp23, Glu24, and Asp115 each contribute to the a divalent metal cation site.

The protein belongs to the RNase HII family. Mn(2+) serves as cofactor. It depends on Mg(2+) as a cofactor.

The protein localises to the cytoplasm. The enzyme catalyses Endonucleolytic cleavage to 5'-phosphomonoester.. In terms of biological role, endonuclease that specifically degrades the RNA of RNA-DNA hybrids. This chain is Ribonuclease HII, found in Psychromonas ingrahamii (strain DSM 17664 / CCUG 51855 / 37).